A 68-amino-acid polypeptide reads, in one-letter code: Long neurotoxin 1 (68 aa).

5 disulfides stabilise this stretch: C3-C20, C13-C41, C26-C30, C45-C56, and C57-C62.

Belongs to the three-finger toxin family. Long-chain subfamily. Type II alpha-neurotoxin sub-subfamily. In terms of tissue distribution, expressed by the venom gland.

The protein resides in the secreted. Functionally, binds with high affinity to muscular (alpha-1/CHRNA1) and neuronal (alpha-7/CHRNA7) nicotinic acetylcholine receptor (nAChR) and inhibits acetylcholine from binding to the receptor, thereby impairing neuromuscular and neuronal transmission. In Aspidelaps scutatus (Shield-nose snake), this protein is Long neurotoxin 1.